A 199-amino-acid polypeptide reads, in one-letter code: Recombination protein RecR (199 aa).

The segment at 58–73 (CRICYNITDTEVCNIC) adopts a C4-type zinc-finger fold. One can recognise a Toprim domain in the interval 81-176 (SLICVVSHPM…KVTRIAHGVP (96 aa)).

It belongs to the RecR family.

Functionally, may play a role in DNA repair. It seems to be involved in an RecBC-independent recombinational process of DNA repair. It may act with RecF and RecO. In Thermoanaerobacter sp. (strain X514), this protein is Recombination protein RecR.